The sequence spans 164 residues: Peptidyl-prolyl cis-trans isomerase CYP18-2 (164 aa).

A PPIase cyclophilin-type domain is found at 12 to 162; it reads VTLETSMGPF…HEVKILRTKV (151 aa).

The protein belongs to the cyclophilin-type PPIase family. As to expression, ubiquitous.

The protein localises to the cytoplasm. The catalysed reaction is [protein]-peptidylproline (omega=180) = [protein]-peptidylproline (omega=0). Its function is as follows. PPIases accelerate the folding of proteins. It catalyzes the cis-trans isomerization of proline imidic peptide bonds in oligopeptides. The sequence is that of Peptidyl-prolyl cis-trans isomerase CYP18-2 (CYP18-2) from Arabidopsis thaliana (Mouse-ear cress).